A 2280-amino-acid polypeptide reads, in one-letter code: MRGHQFKSWIFELREILREIKNSHHFLDSWTQFNSAGSFIHIFFHQERFLKLFDPRIWSILLSRNSQGSTSNRYFTIKGVILFVVAVLIYRINNRNMVERKNLYLIGLLPIPMNSIGPRNDTLEESVGSSNINRLIVSLLYLPKGKKISESCFLNPKESTWVLPITKKCSMPESNWGSRWWRNWIGKKRDSSCKISNETVAGIEILFKEKDLKYLEFLFVYYMDDPIRKDHDWELFDRLSLRKSRNRINLNSGPLFEILVKHWISYLMSAFREKIPIEVEGFFKQQGAGSTIQSNDIEHVSHLFSRNKWAISLQNCAQFHMWQFRQDLFVSWGKNPPESDFLRNVSRENWIWLDNVWLVNKDRFFSKVQNVSSNIQYDSTRSSFVQVTDSSQLKGSSDQSRDHLDSISNEDSEYHTLINQREIQQRKERSILWDPSFLQTERKEIESGRFPKCLSGYSSMSRLFTEREKQMINHLFPEEIEEFLGNPTRSVRSFFSDRWSELHLGSNPTERSTRDQKLLKKQQDLSFVPSKRSENKEMVNIFKIITYLQNTVSIHPISSDPGCDMVPKDEPDMDSSNKISFLNKNPFFDLFHLFHDRNRGGYTLHYDFESEERFQEMADLFTLSITEPDLVYHKGFAFSIDSCGLDQKQFLNEARDESKKKSLLVLPPIFYEENESFSRRIRKKWVRISCGNDLEDPKPKIVVFASNNIMEAVTQYRLIRNLIQIQYSTYGYIRNVLNRFFLMNRSDRNFEYGIQRDQIGKDTLNHRTIMKYTINQYLSNLKKSQKKWFEPLILISRTERSMNRDPDAYRYKWSNGSKNFQEHLEQSVSEQKSRFQVVFDRLRINQYSIDWSEVIDKKDLSKPLRFFLSKSLLFLSKLLFFLSNSLPFFCVSFGNIPIHRSEIYIYELKGPNDQLCNQLLESIGLQIVHLKKWKPFLLDDHDTSQKSKFLINGGTISPFLFNKIPKWMIDSFHTRNNRRKSFDNPDSYFSMIFHDQDNWLNPVKPFHRSSLISSFYKANRLRFLNNPHHFCFYWNTRFPFSVEKARINNSDFTYGQFLNILFIRNKIFSLCVGKKKHAFWGRDTISPIESQVSNIFIPNDFPQSGDETYNLYKSFHFPSRSDPFVRRAIYSIADISGTPLTEGQIVNFERTYCQPLSDMNLSDSEGKNLHQYLNFNSNMGLIHTPCSEKDLSSEKRKKRSLCLKKCVEKGQMYRTFQRDSAFSTLSKWNLFQTYMPWFLTSTGYKYLNLIFLDTFSDLLPILSSSQKFVPIFHDIMHGSGISWRILQKKLCLPQWNLISEISSKCLHNLLLSEEMIHRNNESPLISTHLRSPNAREFLYSILFLLLVAGYLVRTHLLFVSRASSELQTEFEKVKSLMIPSSMIELRKLLDRYPTSEPNSFWLKNLFLVALEQLGDSLEEIRGSASGGNMLGPAYGVKSIRSKKKDWNINLIEIIDLIPNPINRITFSRNTRHLSHTSKEIYSLIRKRKNVNGDWIDDKIESWVANSDSIDDEEREFLVQFSTLTTENRIDQILLSLTHSDRLSKNDSGYQMIEQPGAIYLRYLVDIHKKHLMNYEFNPSCLAERRIFLAHYQTITYSQTSCGENSFHFPSHGKPFSLRLALSPSRGILVIGSIGTGRSYLVKYLATNSYVPFITVFLNKFLDNKPKGFLLDEIDIDDSDDIDDSDNLDASDDIDRDLDTELKLLTRMNGLTMDMMPEIDRFYITLQFELAKAMSPCIIWIPNIHDLDVNESNDLALGLLVNHLSRDCERCSTRNILVIASTHIPQKVDPALIAPNKLNTCIKIRRLLLPQQRKHFFTLSYTRGFHLEKKMFHTNGFGSITMGSNARDLVALTNEVLSISITQKKSIIDTNTIRSALHRQTWDLRSQVRSVQDHGILFYQIGRAVAQNVLLSNCPIDPISIYMKKKSCNEGDSYLYKWYFELGTSMKRLTILLYLLSCSAGSVAQDLWSLSGPDEKNGITSYGLVENDSDLVHGLLEVEGALVGSSRTEKDCSQFDNDRVTLLLRPEPRNPLDMMQNGSCSILDQRFLYEKYESEFEEGEGEGALDPQEDLFNHIVWAPRIWRPWGFLFDCIERPNELGFPYWSRSFRGKRIIYDEEDELQENDSEFLQSGTMQYQTRDRSSKEQGLFRISQFIWDPADPLFFLFKDQPPGSVFSHRELFADEEMSKGLLTSQTDPPTSIYKRWFIKNTQEKHFELLINRQRWLRTNSSLSNGSFRSNTLSESYQYLSNLFLSNGTLLDQMTKTLLRKRWLFPDEMKIGFM.

1631 to 1638 (GSIGTGRS) serves as a coordination point for ATP.

Belongs to the Ycf2 family.

Its subcellular location is the plastid. The protein localises to the chloroplast stroma. Its function is as follows. Probable ATPase of unknown function. Its presence in a non-photosynthetic plant (Epifagus virginiana) and experiments in tobacco indicate that it has an essential function which is probably not related to photosynthesis. The protein is Protein Ycf2 (ycf2-A) of Nicotiana tabacum (Common tobacco).